The chain runs to 384 residues: Eukaryotic translation initiation factor 3 subunit M (384 aa).

In terms of domain architecture, PCI spans 184–346 (ENRKAIEAMI…KKILITGAFP (163 aa)).

Belongs to the eIF-3 subunit M family. Component of the eukaryotic translation initiation factor 3 (eIF-3) complex.

Its subcellular location is the cytoplasm. In terms of biological role, component of the eukaryotic translation initiation factor 3 (eIF-3) complex, which is involved in protein synthesis of a specialized repertoire of mRNAs and, together with other initiation factors, stimulates binding of mRNA and methionyl-tRNAi to the 40S ribosome. The eIF-3 complex specifically targets and initiates translation of a subset of mRNAs involved in cell proliferation. The chain is Eukaryotic translation initiation factor 3 subunit M from Schistosoma japonicum (Blood fluke).